The chain runs to 553 residues: Cytokine-like nuclear factor N-PAC (553 aa).

Residues 8–66 enclose the PWWP domain; sequence LGDLVWGKLGRYPPWPGKIVNPPKDLKKPRGKKCFFVKFFGTEDHAWIKVEQLKPYHAH. 2 stretches are compositionally biased toward basic and acidic residues: residues 92–145 and 162–182; these read RAKG…EGKK and RAQE…KDLT. The interval 92–188 is disordered; it reads RAKGKDQTSS…KDLTIPESST (97 aa). Ser130 carries the phosphoserine modification. Residue Lys135 forms a Glycyl lysine isopeptide (Lys-Gly) (interchain with G-Cter in SUMO2) linkage. Ser167 carries the phosphoserine modification. Residues 168–180 constitute a DNA-binding region (a.T hook); it reads PRKRGRPPKDEKD. Residues Lys176, Lys179, Lys201, and Lys211 each participate in a glycyl lysine isopeptide (Lys-Gly) (interchain with G-Cter in SUMO2) cross-link. Residues 214–217 are interaction with histone H3; sequence DPHF. Positions 216 to 225 are interaction with KDM1B; the sequence is HFHHFLLSQT. Glycyl lysine isopeptide (Lys-Gly) (interchain with G-Cter in SUMO2) cross-links involve residues Lys227, Lys237, Lys240, and Lys269. The dehydrogenase domain stretch occupies residues 261–553; sequence GSITPTDKKI…MSAVYRAYIH (293 aa). An NAD(+)-binding site is contributed by 271 to 285; the sequence is GFLGLGLMGSGIVSN. A Glycyl lysine isopeptide (Lys-Gly) (interchain with G-Cter in SUMO2) cross-link involves residue Lys302. Residues Thr362 and Lys505 each coordinate NAD(+). Position 540 is a phosphoserine (Ser540).

It belongs to the HIBADH-related family. NP60 subfamily. As to quaternary structure, homotetramere. Interacts with MAPK14. Interacts with KDM1B at nucleosomes; this interaction stimulates H3K4me1 and H3K4me2 demethylation. Binds to mononucleosomes. Interacts with GATA4; the interaction is required for a synergistic activation of GATA4 target genes transcription.

Its subcellular location is the nucleus. It is found in the chromosome. Its function is as follows. Cytokine-like nuclear factor with chromatin gene reader activity involved in chromatin modification and regulation of gene expression. Acts as a nucleosome-destabilizing factor that is recruited to genes during transcriptional activation. Recognizes and binds histone H3 without a preference for specific epigenetic markers and also binds DNA. Interacts with KDM1B and promotes its histone demethylase activity by facilitating the capture of H3 tails, they form a multifunctional enzyme complex that modifies transcribed chromatin and facilitates Pol II transcription through nucleosomes. Stimulates the acetylation of 'Lys-56' of nucleosomal histone H3 (H3K56ac) by EP300. With GATA4, co-binds a defined set of heart development genes and coregulates their expression during cardiomyocyte differentiation. Regulates p38 MAP kinase activity by mediating stress activation of MAPK14/p38alpha and specifically regulating MAPK14 signaling. Indirectly promotes phosphorylation of MAPK14 and activation of ATF2. The phosphorylation of MAPK14 requires upstream activity of MAP2K4 and MAP2K6. The chain is Cytokine-like nuclear factor N-PAC (GLYR1) from Pongo abelii (Sumatran orangutan).